We begin with the raw amino-acid sequence, 291 residues long: Phytanoyl-CoA dioxygenase domain-containing protein 1 (291 aa).

T55 is modified (phosphothreonine). Residues K102, M141, H156–D158, and W174 contribute to the 2-oxoglutarate site. Fe cation is bound by residues H156 and D158. H246 is a Fe cation binding site. 2 residues coordinate 2-oxoglutarate: S248 and R257.

Belongs to the PhyH family. PHYHD1 subfamily. Requires Fe cation as cofactor.

In terms of biological role, 2-oxoglutarate(2OG)-dependent dioxygenase that catalyzes the conversion of 2-oxoglutarate to succinate and CO(2) in an iron-dependent manner. However, does not couple 2OG turnover to the hydroxylation of acyl-coenzyme A derivatives, implying that it is not directly involved in phytanoyl coenzyme-A metabolism. Does not show detectable activity towards fatty acid CoA thioesters. This Bos taurus (Bovine) protein is Phytanoyl-CoA dioxygenase domain-containing protein 1 (PHYHD1).